The following is a 471-amino-acid chain: MVPKTIIEKIWDEHVVYREDGKPDLLYIDLHLVHEVTSPQAFEGLRQKGRKVRRPDLTFATMDHNVPTINRSVVEDEVAKNQMTALERNCREFGVPLADLNSPEQGIVHVIGPELGLTQPGKTIVCGDSHTSTHGAFGALAFGIGTSEVEHVLATQTLWQHRPKTMQVNVTGSLAPGVSAKDVILAIIGKFGVDFGTGYVLEFTGDVIRRMSMEERMTICNMSIEAGARAGLIAPDDVTFAYLKERKYAPKGEAFEQAVEKWKQLCTDEGAVYDRVVHIDGSEIAPTVTWGTTPAMSSPIDGTVPDPNEFATETERKAVQLALQYMGLKPGTKMTDIAVQHVFIGSCTNSRISDLREAAQIVKGKKVAPGVRALVVPGSQQVKKQAEEEGIAQTFIDAGFEWRDSGCSMCLGMNPDTVPAGEHCASTSNRNFEGRQGKGARTHLVSPAMAAAAAIYGHFVDVRTLYKEVVR.

Cys347, Cys407, and Cys410 together coordinate [4Fe-4S] cluster.

It belongs to the aconitase/IPM isomerase family. LeuC type 1 subfamily. As to quaternary structure, heterodimer of LeuC and LeuD. It depends on [4Fe-4S] cluster as a cofactor.

It catalyses the reaction (2R,3S)-3-isopropylmalate = (2S)-2-isopropylmalate. It participates in amino-acid biosynthesis; L-leucine biosynthesis; L-leucine from 3-methyl-2-oxobutanoate: step 2/4. Its function is as follows. Catalyzes the isomerization between 2-isopropylmalate and 3-isopropylmalate, via the formation of 2-isopropylmaleate. The sequence is that of 3-isopropylmalate dehydratase large subunit from Anoxybacillus flavithermus (strain DSM 21510 / WK1).